Consider the following 143-residue polypeptide: Large ribosomal subunit protein uL13 (143 aa).

This sequence belongs to the universal ribosomal protein uL13 family. As to quaternary structure, part of the 50S ribosomal subunit.

Functionally, this protein is one of the early assembly proteins of the 50S ribosomal subunit, although it is not seen to bind rRNA by itself. It is important during the early stages of 50S assembly. The sequence is that of Large ribosomal subunit protein uL13 from Clostridioides difficile (strain 630) (Peptoclostridium difficile).